A 777-amino-acid chain; its full sequence is Translation initiation factor IF-2 (777 aa).

Disordered regions lie at residues 30–54 and 98–117; these read SPSMGATIVKKRRRKTHDTEEQDEN and EDSNEKTNDRDSATNTSFKE. The span at 98–109 shows a compositional bias: basic and acidic residues; sequence EDSNEKTNDRDS. A tr-type G domain is found at 279–449; that stretch reads PKPPIVTFMG…LLIAELMKLE (171 aa). The interval 288-295 is G1; it reads GHVDHGKT. 288 to 295 provides a ligand contact to GTP; the sequence is GHVDHGKT. The interval 313–317 is G2; it reads GITQH. The segment at 334–337 is G3; that stretch reads DTPG. Residues 334 to 338 and 388 to 391 contribute to the GTP site; these read DTPGH and NKID. A G4 region spans residues 388–391; it reads NKID. A G5 region spans residues 425-427; sequence SAK.

Belongs to the TRAFAC class translation factor GTPase superfamily. Classic translation factor GTPase family. IF-2 subfamily.

It localises to the cytoplasm. In terms of biological role, one of the essential components for the initiation of protein synthesis. Protects formylmethionyl-tRNA from spontaneous hydrolysis and promotes its binding to the 30S ribosomal subunits. Also involved in the hydrolysis of GTP during the formation of the 70S ribosomal complex. The chain is Translation initiation factor IF-2 from Wolbachia sp. subsp. Brugia malayi (strain TRS).